A 328-amino-acid polypeptide reads, in one-letter code: D-cysteine desulfhydrase (328 aa).

The residue at position 51 (Lys51) is an N6-(pyridoxal phosphate)lysine.

The protein belongs to the ACC deaminase/D-cysteine desulfhydrase family. Homodimer. It depends on pyridoxal 5'-phosphate as a cofactor.

It carries out the reaction D-cysteine + H2O = hydrogen sulfide + pyruvate + NH4(+) + H(+). Its function is as follows. Catalyzes the alpha,beta-elimination reaction of D-cysteine and of several D-cysteine derivatives. It could be a defense mechanism against D-cysteine. This chain is D-cysteine desulfhydrase, found in Salmonella choleraesuis (strain SC-B67).